We begin with the raw amino-acid sequence, 902 residues long: Probable leucine--tRNA ligase, mitochondrial (902 aa).

Lys-67 is subject to N6-acetyllysine. A 'HIGH' region motif is present at residues 91–101; it reads YPSGKLHMGHV. Lys-235 carries the post-translational modification N6-acetyllysine. A 'KMSKS' region motif is present at residues 638-642; the sequence is KMSKS. Lys-641 is an ATP binding site.

The protein belongs to the class-I aminoacyl-tRNA synthetase family.

It localises to the mitochondrion matrix. It carries out the reaction tRNA(Leu) + L-leucine + ATP = L-leucyl-tRNA(Leu) + AMP + diphosphate. The chain is Probable leucine--tRNA ligase, mitochondrial (Lars2) from Mus musculus (Mouse).